The primary structure comprises 58 residues: UPF0391 membrane protein GM21_0108 (58 aa).

The next 2 helical transmembrane spans lie at 4 to 24 (WALI…GGIA) and 33 to 53 (VLFY…LLAG).

It belongs to the UPF0391 family.

It localises to the cell membrane. This chain is UPF0391 membrane protein GM21_0108, found in Geobacter sp. (strain M21).